Reading from the N-terminus, the 123-residue chain is Large ribosomal subunit protein bL12 (123 aa).

An N6-methyllysine modification is found at K84. The segment at 94–123 (PATLKEGMSKEDGDEAKTKLEEAGASVELK) is disordered. The span at 100 to 115 (GMSKEDGDEAKTKLEE) shows a compositional bias: basic and acidic residues.

It belongs to the bacterial ribosomal protein bL12 family. Homodimer. Part of the ribosomal stalk of the 50S ribosomal subunit. Forms a multimeric L10(L12)X complex, where L10 forms an elongated spine to which 2 to 4 L12 dimers bind in a sequential fashion. Binds GTP-bound translation factors.

Its function is as follows. Seems to be the binding site for several of the factors involved in protein synthesis and appears to be essential for accurate translation. Functionally, forms part of the ribosomal stalk which helps the ribosome interact with GTP-bound translation factors. Is thus essential for accurate translation. The protein is Large ribosomal subunit protein bL12 of Halophilic eubacterium NRCC 41227.